We begin with the raw amino-acid sequence, 96 residues long: Protein RnfH (96 aa).

It belongs to the UPF0125 (RnfH) family.

This Escherichia coli O139:H28 (strain E24377A / ETEC) protein is Protein RnfH.